A 223-amino-acid chain; its full sequence is UPF0758 protein FMG_0357 (223 aa).

Residues 101–223 form the MPN domain; sequence SLNDPDSVAE…SLSMRKGMYF (123 aa). Residues histidine 172, histidine 174, and aspartate 185 each coordinate Zn(2+). A JAMM motif motif is present at residues 172–185; that stretch reads HNHPSGSLIPSNAD.

The protein belongs to the UPF0758 family.

This Finegoldia magna (strain ATCC 29328 / DSM 20472 / WAL 2508) (Peptostreptococcus magnus) protein is UPF0758 protein FMG_0357.